The chain runs to 387 residues: Penicillopepsin-1 (387 aa).

Residues 1–19 (MVNSKTVVSALALSALAAA) form the signal peptide. A propeptide spans 20-66 (APAPSSTTSFSINQVAVKKPAIHPAVKYAKALAKYHAEIPSNVASAA) (activation peptide). Residues 85 to 384 (YVTPITAGSS…DGDNLQLGFA (300 aa)) enclose the Peptidase A1 domain. Residues aspartate 101 and aspartate 279 contribute to the active site. A glycan (N-linked (GlcNAc...) asparagine) is linked at asparagine 304. A disulfide bridge connects residues cysteine 315 and cysteine 347.

Belongs to the peptidase A1 family. As to quaternary structure, monomer.

The protein localises to the secreted. The enzyme catalyses Hydrolysis of proteins with broad specificity similar to that of pepsin A, preferring hydrophobic residues at P1 and P1', but also cleaving 20-Gly-|-Glu-21 in the B chain of insulin. Clots milk, and activates trypsinogen.. Its function is as follows. Secreted aspartic endopeptidase that allows assimilation of proteinaceous substrates. The scissile peptide bond is attacked by a nucleophilic water molecule activated by two aspartic residues in the active site. Shows a broad primary substrate specificity. Favors hydrophobic residues at the P1 and P1' positions, but can also activate trypsinogen and hydrolyze the B chain of insulin between positions 'Gly-20' and 'Glu-21'. The protein is Penicillopepsin-1 (pepA) of Talaromyces stipitatus (strain ATCC 10500 / CBS 375.48 / QM 6759 / NRRL 1006) (Penicillium stipitatum).